A 190-amino-acid polypeptide reads, in one-letter code: Probable DNA replication complex GINS protein PSF2 (190 aa).

This sequence belongs to the GINS2/PSF2 family. Component of the GINS complex which is a heterotetramer of gins1, gins2, gins3 and gins4.

The protein resides in the nucleus. Its function is as follows. The GINS complex plays an essential role in the initiation of DNA replication. This Brugia malayi (Filarial nematode worm) protein is Probable DNA replication complex GINS protein PSF2.